We begin with the raw amino-acid sequence, 212 residues long: Small ribosomal subunit protein eS1 (212 aa).

It belongs to the eukaryotic ribosomal protein eS1 family.

This Staphylothermus marinus (strain ATCC 43588 / DSM 3639 / JCM 9404 / F1) protein is Small ribosomal subunit protein eS1.